Reading from the N-terminus, the 203-residue chain is Hydra actinoporin-like toxin 2 (203 aa).

Residues 1–21 (MLSYLCFGCFLVSASLEIACG) form the signal peptide. Residues 175–177 (RGG) carry the Cell attachment site motif.

This sequence belongs to the actinoporin family. HALT subfamily. Octamer or nonamer in membranes. Monomer in the soluble state. In vitro, interacts with folate receptor alpha (of target organism). Strongly expressed in the gland and mucous cells in the endoderm.

Its subcellular location is the nematocyst. The protein resides in the secreted. It is found in the target cell membrane. In terms of biological role, pore-forming protein that forms hydrophilic pores and causes cytolysis. Compared to equinatoxin-2 (AC P61914), it reveals lower cytolysis activity (5-12-fold difference, tested on erythrocytes), a larger pore size (probably 2-3 nm) and different affinity to membrane lipids (100-fold lower affinity to sphingomyelin). Binds to sulfatides (SFT). Shows cytolytic activity on HeLa cells, with a different potency than its paralogs (from most potent to less potent: HALT-4&gt;HALT-6~HALT-1&gt;HALT-3&gt;HALT-7&gt;HALT-2). Pore formation is a multi-step process that involves specific recognition of membrane lipid by a protein aromatic residues rich region, firm binding to the membrane (mainly driven by hydrophobic interactions) accompanied by the transfer of the N-terminal region to the lipid-water interface and finally pore formation after oligomerization of monomers. In vitro, binds to the folate receptor alpha (FOLR1), a GPI-anchored membrane protein that plays a major role in the uptake of folate/folic acid into cells via endocytosis, suggesting a possible involvement of this receptor in the mechanism of HALT-1-induced cell lysis. In vivo, does not cause visible paralysis in larvae of the blowfly Sarcophaga faculata, the most common arthropod prey of Hydra. This Hydra vulgaris (Hydra) protein is Hydra actinoporin-like toxin 2.